The chain runs to 475 residues: Ribulose bisphosphate carboxylase large chain (475 aa).

The propeptide occupies 1 to 2; that stretch reads MA. P3 is subject to N-acetylproline. Substrate contacts are provided by N123 and T173. K175 (proton acceptor) is an active-site residue. K177 contributes to the substrate binding site. Mg(2+) is bound by residues K201, D203, and E204. K201 is subject to N6-carboxylysine. H294 functions as the Proton acceptor in the catalytic mechanism. Positions 295, 327, and 379 each coordinate substrate.

The protein belongs to the RuBisCO large chain family. Type I subfamily. As to quaternary structure, heterohexadecamer of 8 large chains and 8 small chains. Mg(2+) serves as cofactor.

It localises to the plastid. It is found in the chloroplast. It carries out the reaction 2 (2R)-3-phosphoglycerate + 2 H(+) = D-ribulose 1,5-bisphosphate + CO2 + H2O. The enzyme catalyses D-ribulose 1,5-bisphosphate + O2 = 2-phosphoglycolate + (2R)-3-phosphoglycerate + 2 H(+). Functionally, ruBisCO catalyzes two reactions: the carboxylation of D-ribulose 1,5-bisphosphate, the primary event in carbon dioxide fixation, as well as the oxidative fragmentation of the pentose substrate in the photorespiration process. Both reactions occur simultaneously and in competition at the same active site. In Ostreococcus tauri, this protein is Ribulose bisphosphate carboxylase large chain.